Consider the following 212-residue polypeptide: uncharacterized protein (212 aa).

The first 21 residues, 1–21 (MRRLTAFGLALLLLASGVARG), serve as a signal peptide directing secretion.

The protein to E.coli YfaT and T.maritima TM0986.

This is an uncharacterized protein from Pseudomonas aeruginosa (strain ATCC 15692 / DSM 22644 / CIP 104116 / JCM 14847 / LMG 12228 / 1C / PRS 101 / PAO1).